Here is a 650-residue protein sequence, read N- to C-terminus: Transcription factor LHW (650 aa).

Disordered regions lie at residues L381–Y417 and L431–M470. Over residues V384–P397 the composition is skewed to low complexity. The Nuclear localization signal motif lies at N451 to G458. Residues L455–L504 enclose the bHLH domain. Positions K456–M470 are enriched in basic and acidic residues.

Belongs to the bHLH protein family. LHW subfamily. In terms of assembly, homodimer. Can also interact with bHLH proteins. In terms of tissue distribution, expressed in both root and shoot meristems. Present in root tips.

The protein localises to the nucleus. Transcription activator that regulates root development; promotes the production of stele cells in roots. Coordinately controls the number of all vascular cell types by regulating the size of the pool of cells from which they arise. This Arabidopsis thaliana (Mouse-ear cress) protein is Transcription factor LHW (LHW).